The primary structure comprises 330 residues: Phosphate acyltransferase (330 aa).

It belongs to the PlsX family. Homodimer. Probably interacts with PlsY.

It localises to the cytoplasm. It catalyses the reaction a fatty acyl-[ACP] + phosphate = an acyl phosphate + holo-[ACP]. It participates in lipid metabolism; phospholipid metabolism. Catalyzes the reversible formation of acyl-phosphate (acyl-PO(4)) from acyl-[acyl-carrier-protein] (acyl-ACP). This enzyme utilizes acyl-ACP as fatty acyl donor, but not acyl-CoA. In Bacillus thuringiensis (strain Al Hakam), this protein is Phosphate acyltransferase.